A 546-amino-acid chain; its full sequence is Capsid protein VP1 (546 aa).

Residues 1–38 (MMMASKDAPQSADGASGAGQLVPEVNTADPLPMEPVAG) are disordered. Positions 1–226 (MMMASKDAPQ…FLFLVPPTIE (226 aa)) are shell domain. A P1 sub-domain 1 region spans residues 227-279 (QKTRAFTVPNIPLQTLSNSRFPSLIQGMILSPDASQVVQFQNGRCLIDGQLLG). The segment at 227–545 (QKTRAFTVPN…TARGRLGVRR (319 aa)) is protruding domain. The P2 sub-domain stretch occupies residues 280–416 (TTPATSGQLF…GSSLSQAANL (137 aa)). The segment at 417-546 (APPVFPPGFG…ARGRLGVRRI (130 aa)) is P1 sub-domain 2. Residues 538 to 545 (RGRLGVRR) are plays a role in binding to host histo-blood group structures antigens and in the formation of P-particles.

This sequence belongs to the caliciviridae capsid protein family. Homodimer. Homomultimer. Interacts with the minor capsid protein VP2. Interacts (via C-terminus) with host type I histo-blood group structures antigens at the surface of target cells. May be cleaved by host protease to generate soluble capsid protein. Assembled capsid cannot be cleaved.

Its subcellular location is the virion. It is found in the host cytoplasm. In terms of biological role, capsid protein self assembles to form an icosahedral capsid with a T=3 symmetry, about 38 nm in diameter, and consisting of 180 capsid proteins. A smaller form of capsid with a diameter of 23 nm might be capsid proteins assembled as icosahedron with T=1 symmetry. The capsid encapsulates the genomic RNA and is decorated with VP2 proteins. Attaches virion to target cells by binding histo-blood group antigens (HBGAs) present on gastroduodenal epithelial cells. The soluble capsid protein may play a role in viral immunoevasion. In Southampton virus (strain GI/Human/United Kingdom/Southampton/1991) (SHV), this protein is Capsid protein VP1.